Consider the following 42-residue polypeptide: Osteocalcin (42 aa).

The Gla domain maps to 1 to 40 (YLDHGLGAPAPYVDPLEPKREVDELADQMGFQEAYRRFYG). The residue at position 9 (P9) is a 4-hydroxyproline. Ca(2+)-binding residues include E17, E21, and D23. A 4-carboxyglutamate mark is found at E17 and E21.

It belongs to the osteocalcin/matrix Gla protein family. Post-translationally, gamma-carboxyglutamic acid residues are formed by vitamin K dependent carboxylation. These residues are essential for the binding of calcium.

Its subcellular location is the secreted. Functionally, the carboxylated form is one of the main organic components of the bone matrix, which constitutes 1-2% of the total bone protein: it acts as a negative regulator of bone formation and is required to limit bone formation without impairing bone resorption or mineralization. The carboxylated form binds strongly to apatite and calcium. Its function is as follows. The uncarboxylated form acts as a hormone secreted by osteoblasts, which regulates different cellular processes, such as energy metabolism, male fertility and brain development. Regulates of energy metabolism by acting as a hormone favoring pancreatic beta-cell proliferation, insulin secretion and sensitivity and energy expenditure. Uncarboxylated osteocalcin hormone also promotes testosterone production in the testes: acts as a ligand for G protein-coupled receptor GPRC6A at the surface of Leydig cells, initiating a signaling response that promotes the expression of enzymes required for testosterone synthesis in a CREB-dependent manner. Also acts as a regulator of brain development: osteocalcin hormone crosses the blood-brain barrier and acts as a ligand for GPR158 on neurons, initiating a signaling response that prevents neuronal apoptosis in the hippocampus, favors the synthesis of all monoamine neurotransmitters and inhibits that of gamma-aminobutyric acid (GABA). Osteocalcin also crosses the placenta during pregnancy and maternal osteocalcin is required for fetal brain development. This is Osteocalcin from Camelops hesternus (Western camel).